Reading from the N-terminus, the 372-residue chain is MHLKSIRLQNYRNYETLELDFSEQTNVLIGENAQGKTNLLESIYVLALAKSHRTTQDRELIGWEADAASIEGRIHKRTGESVQSLSFSPKGKKAKLNHLEQRRLSDYVGAFNVVLFAPEDLAIVKGSPQGRRRFLDMEIGQVSPVYLHELNQYLKTLKQRNALLKQLSTKGGDETLLEVLTDQLIELAVKIVMRRYHFIDQLEKWANPIHSGITRDLETLTIQYVSDTFQKERFSKEQMFETYRQKFDKIRENERRRGVTLFGPHRDDFELYVNNRNVQTFGSQGQQRTAALSLKLAEIELIHEEVGEYPLLLLDDVLSELDDHRQTHLLDTMGRKVQTILTTTNIDGIAHETIQQAKVFHVKQGEVETESV.

Position 30–37 (30–37) interacts with ATP; the sequence is GENAQGKT.

This sequence belongs to the RecF family.

The protein resides in the cytoplasm. The RecF protein is involved in DNA metabolism; it is required for DNA replication and normal SOS inducibility. RecF binds preferentially to single-stranded, linear DNA. It also seems to bind ATP. The sequence is that of DNA replication and repair protein RecF from Exiguobacterium sp. (strain ATCC BAA-1283 / AT1b).